A 214-amino-acid polypeptide reads, in one-letter code: Large ribosomal subunit protein uL6m (214 aa).

Residues 1-16 (MSFIQRRLLSQTLFLR) constitute a mitochondrion transit peptide.

This sequence belongs to the universal ribosomal protein uL6 family. Component of the mitochondrial large ribosomal subunit (mt-LSU). Mature yeast 74S mitochondrial ribosomes consist of a small (37S) and a large (54S) subunit. The 37S small subunit contains a 15S ribosomal RNA (15S mt-rRNA) and 34 different proteins. The 54S large subunit contains a 21S rRNA (21S mt-rRNA) and 46 different proteins.

It localises to the mitochondrion. Component of the mitochondrial ribosome (mitoribosome), a dedicated translation machinery responsible for the synthesis of mitochondrial genome-encoded proteins, including at least some of the essential transmembrane subunits of the mitochondrial respiratory chain. The mitoribosomes are attached to the mitochondrial inner membrane and translation products are cotranslationally integrated into the membrane. This chain is Large ribosomal subunit protein uL6m (MRPL6), found in Saccharomyces cerevisiae (strain ATCC 204508 / S288c) (Baker's yeast).